Reading from the N-terminus, the 475-residue chain is Ribulose bisphosphate carboxylase large chain (475 aa).

A propeptide spanning residues 1-2 (MS) is cleaved from the precursor. Pro3 carries the post-translational modification N-acetylproline. The residue at position 14 (Lys14) is an N6,N6,N6-trimethyllysine. Residues Asn123 and Thr173 each contribute to the substrate site. The active-site Proton acceptor is Lys175. Lys177 is a substrate binding site. Mg(2+) contacts are provided by Lys201, Asp203, and Glu204. Position 201 is an N6-carboxylysine (Lys201). The Proton acceptor role is filled by His294. Residues Arg295, His327, and Ser379 each contribute to the substrate site.

Belongs to the RuBisCO large chain family. Type I subfamily. Heterohexadecamer of 8 large chains and 8 small chains; disulfide-linked. The disulfide link is formed within the large subunit homodimers. It depends on Mg(2+) as a cofactor. In terms of processing, the disulfide bond which can form in the large chain dimeric partners within the hexadecamer appears to be associated with oxidative stress and protein turnover.

It localises to the plastid. The protein resides in the chloroplast. It catalyses the reaction 2 (2R)-3-phosphoglycerate + 2 H(+) = D-ribulose 1,5-bisphosphate + CO2 + H2O. The enzyme catalyses D-ribulose 1,5-bisphosphate + O2 = 2-phosphoglycolate + (2R)-3-phosphoglycerate + 2 H(+). Its function is as follows. RuBisCO catalyzes two reactions: the carboxylation of D-ribulose 1,5-bisphosphate, the primary event in carbon dioxide fixation, as well as the oxidative fragmentation of the pentose substrate in the photorespiration process. Both reactions occur simultaneously and in competition at the same active site. The protein is Ribulose bisphosphate carboxylase large chain of Cycas taitungensis (Prince sago).